The primary structure comprises 306 residues: MSGAFYVFTALLLVASDQIAAESGKRLEMYKHDVMAASNAVVKSLPNRFLRGSRDEPDNLANEERTVYSVLASMINEGVSKMPCAAEVVEKISHTTEAVENMPRAAKAVKKRPRGAKAGRKMPRAAEAEAVKKVPRAGTAVKKAPPLAEDVKEMPRAKEAMEELRRAADATEDMQRAKANDLLKALIGADEALKKHWTPSGNTAAIGDTSYDVFNKVILSLPEWKINFRGMKSMAVLDQHRENIDLVHKTFEILCDKNVKPTAAEVSFIWSMMEWKGPNPEKYHRRNLVRQAQRYVFLDLRNVKKR.

An N-terminal signal peptide occupies residues 1 to 21 (MSGAFYVFTALLLVASDQIAA). A RxLR-dEER motif is present at residues 48–65 (RFLRGSRDEPDNLANEER). The segment at 105-142 (AAKAVKKRPRGAKAGRKMPRAAEAEAVKKVPRAGTAVK) is disordered. Residues 107 to 123 (KAVKKRPRGAKAGRKMP) show a composition bias toward basic residues.

Belongs to the RxLR effector family.

The protein resides in the secreted. The protein localises to the host nucleus. Its function is as follows. Secreted effector that partially suppresses the host cell death induced by cell death-inducing proteins. The polypeptide is Secreted RxLR effector protein 76 (Plasmopara viticola (Downy mildew of grapevine)).